We begin with the raw amino-acid sequence, 198 residues long: Autophagy-related protein 16 (198 aa).

A coiled-coil region spans residues 24–177 (ELVQTCSQMA…NKELVDRWMK (154 aa)).

This sequence belongs to the ATG16 family. As to quaternary structure, homodimer. Part of the ATG5-ATG12/ATG16 complex. Several units of each may be present in this complex. Interacts directly with ATG12.

It localises to the preautophagosomal structure membrane. Its function is as follows. Stabilizes the ATG5-ATG12 conjugate. The ATG5-ATG12/ATG16 complex is required for efficient promotion of ATG8-conjugation to phosphatidylethanolamine and ATG8 localization to the pre-autophagosomal structure (PAS). Also recruits ATG3 to the PAS. Involved in endoplasmic reticulum-specific autophagic process and is essential for the survival of cells subjected to severe ER stress. Autophagy is required for proper vegetative growth, asexual/sexual reproduction, and full virulence. Autophagy is particularly involved in the biosynthesis of deoxynivalenol (DON), an important virulence determinant. The protein is Autophagy-related protein 16 of Gibberella zeae (strain ATCC MYA-4620 / CBS 123657 / FGSC 9075 / NRRL 31084 / PH-1) (Wheat head blight fungus).